The primary structure comprises 633 residues: Putative oligopeptide transporter HI_0561 (633 aa).

15 helical membrane passes run 8–28 (GVTF…LKFF), 45–65 (SAGT…MGYW), 70–90 (FWQT…FTIP), 128–148 (IAYG…LRVM), 180–200 (IGIV…GVAV), 230–250 (IGVG…MKPM), 281–301 (MIYI…HFIA), 311–331 (ILLV…VAAA), 345–365 (PISG…VSIG), 379–399 (FLTA…CISN), 420–440 (VALI…LEIL), 483–503 (WTYI…DAFL), 515–535 (VIAV…VIVG), 564–584 (LFSA…AFII), and 604–624 (WDTI…VIFA).

The protein belongs to the oligopeptide OPT transporter family.

It localises to the cell membrane. The chain is Putative oligopeptide transporter HI_0561 from Haemophilus influenzae (strain ATCC 51907 / DSM 11121 / KW20 / Rd).